A 124-amino-acid polypeptide reads, in one-letter code: KESAAAKFZRZHMBSSTSSASSSBYCBZMMKSRNLTQDRCKPVBTFVHZSLABVZAVCSZKBVACKBGZTBCYZSYSTMSITBCRZTGSSKYPBCAYKTTQAKKHIIVACZGBPYVPVHFBASV.

Residues lysine 7 and arginine 10 each contribute to the substrate site. Histidine 12 (proton acceptor) is an active-site residue. 4 disulfides stabilise this stretch: cysteine 26–cysteine 84, cysteine 40–cysteine 95, cysteine 58–cysteine 110, and cysteine 65–cysteine 72. Asparagine 34 carries an N-linked (GlcNAc...) asparagine; partial glycan. Residues 41 to 45 (KPVBT), lysine 66, and arginine 85 contribute to the substrate site. Catalysis depends on histidine 119, which acts as the Proton donor.

It belongs to the pancreatic ribonuclease family. In terms of assembly, monomer. Interacts with and forms tight 1:1 complexes with RNH1. Dimerization of two such complexes may occur. Interaction with RNH1 inhibits this protein. Pancreas.

It localises to the secreted. The enzyme catalyses an [RNA] containing cytidine + H2O = an [RNA]-3'-cytidine-3'-phosphate + a 5'-hydroxy-ribonucleotide-3'-[RNA].. The catalysed reaction is an [RNA] containing uridine + H2O = an [RNA]-3'-uridine-3'-phosphate + a 5'-hydroxy-ribonucleotide-3'-[RNA].. Endonuclease that catalyzes the cleavage of RNA on the 3' side of pyrimidine nucleotides. Acts on single-stranded and double-stranded RNA. The protein is Ribonuclease pancreatic (RNASE1) of Damaliscus korrigum (Topi).